A 438-amino-acid polypeptide reads, in one-letter code: Na(+)/H(+) antiporter NhaA (438 aa).

Helical transmembrane passes span 23–43 (FGGI…NSFL), 62–82 (FFIG…LFFL), 104–124 (SFPV…YFFL), 133–153 (GFGI…MLLG), 162–182 (VFLI…IALF), 185–205 (TNLK…LAIL), 212–232 (SLIP…QSGI), 302–322 (FLAP…NAGV), 337–357 (LGVI…ITFI), 372–392 (WWHI…SMFI), and 410–430 (IAIL…LFAL).

The protein belongs to the NhaA Na(+)/H(+) (TC 2.A.33) antiporter family.

It is found in the cell inner membrane. The catalysed reaction is Na(+)(in) + 2 H(+)(out) = Na(+)(out) + 2 H(+)(in). In terms of biological role, na(+)/H(+) antiporter that extrudes sodium in exchange for external protons. The sequence is that of Na(+)/H(+) antiporter NhaA from Helicobacter pylori (strain J99 / ATCC 700824) (Campylobacter pylori J99).